The sequence spans 361 residues: MERITVTLGERSYPITIAAGLFNDPASFWPLTRGDSAMLVTNDRLAPLYLESLCERLTQAGVKVDRVVLPDGEQNKSLTVLDQVFTALLAKSHGRDTTLIALGGGVIGDLAGFAAASYQRGVRFIQAPTTLLSQVDSSVGGKTAVNHSLGKNMIGAFYQPASVVIDLDCLNTLPRRELSSGLAEVIKYGIILDAAFFAWLEDNLEALLALEPQALAYCIRRCCELKADVVAADEREQGQRALLNLGHTYGHAIETHMGYGNWLHGEAVAAGMMMAVRAARRLGQFSDADAERVSALLQRAGLTMSGPAEMAPEDYLPHMMRDKKVIAGRLRLVLPVTLGNAEVRTGVADDMVVASIKDCQA.

NAD(+) is bound by residues 71 to 76 (DGEQNK), 105 to 109 (GVIGD), 129 to 130 (TT), K142, K151, and 169 to 172 (CLNT). Zn(2+) is bound by residues E184, H247, and H264.

It belongs to the sugar phosphate cyclases superfamily. Dehydroquinate synthase family. It depends on Co(2+) as a cofactor. Requires Zn(2+) as cofactor. NAD(+) is required as a cofactor.

It is found in the cytoplasm. The catalysed reaction is 7-phospho-2-dehydro-3-deoxy-D-arabino-heptonate = 3-dehydroquinate + phosphate. The protein operates within metabolic intermediate biosynthesis; chorismate biosynthesis; chorismate from D-erythrose 4-phosphate and phosphoenolpyruvate: step 2/7. In terms of biological role, catalyzes the conversion of 3-deoxy-D-arabino-heptulosonate 7-phosphate (DAHP) to dehydroquinate (DHQ). In Sodalis glossinidius (strain morsitans), this protein is 3-dehydroquinate synthase.